A 294-amino-acid chain; its full sequence is dTDP-4-dehydrorhamnose reductase (294 aa).

Residues 11–13 (GQL), 38–39 (DI), and 62–64 (AYT) contribute to the NADH site. NADPH is bound by residues 12-13 (QL), 38-39 (DI), and 62-64 (AYT). Residue 103-104 (TD) participates in dTDP-beta-L-rhamnose binding. Positions 127 and 131 each coordinate NADH. Residues Y127 and K131 each contribute to the NADPH site. The Proton donor/acceptor role is filled by Y127. DTDP-beta-L-rhamnose is bound at residue W152.

This sequence belongs to the dTDP-4-dehydrorhamnose reductase family. As to quaternary structure, homodimer. Mg(2+) is required as a cofactor.

It catalyses the reaction dTDP-beta-L-rhamnose + NADP(+) = dTDP-4-dehydro-beta-L-rhamnose + NADPH + H(+). It functions in the pathway carbohydrate biosynthesis; dTDP-L-rhamnose biosynthesis. It participates in bacterial outer membrane biogenesis; LPS O-antigen biosynthesis. Functionally, involved in the biosynthesis of the dTDP-L-rhamnose which is an important component of lipopolysaccharide (LPS). Catalyzes the reduction of dTDP-6-deoxy-L-lyxo-4-hexulose to yield dTDP-L-rhamnose. This is dTDP-4-dehydrorhamnose reductase from Aggregatibacter actinomycetemcomitans (Actinobacillus actinomycetemcomitans).